A 158-amino-acid polypeptide reads, in one-letter code: GTP-dependent dephospho-CoA kinase (158 aa).

GTP is bound by residues D35, V36, D54, K56, E109, and D132.

This sequence belongs to the GTP-dependent DPCK family.

The enzyme catalyses 3'-dephospho-CoA + GTP = GDP + CoA + H(+). Its pathway is cofactor biosynthesis; coenzyme A biosynthesis. Functionally, catalyzes the GTP-dependent phosphorylation of the 3'-hydroxyl group of dephosphocoenzyme A to form coenzyme A (CoA). The sequence is that of GTP-dependent dephospho-CoA kinase from Methanococcus vannielii (strain ATCC 35089 / DSM 1224 / JCM 13029 / OCM 148 / SB).